A 243-amino-acid chain; its full sequence is Orotidine 5'-phosphate decarboxylase (243 aa).

Residues Asp12, Lys34, 61–70 (DLKFHDIPNT), Thr125, Arg187, Gln196, Gly216, and Arg217 each bind substrate. Lys63 serves as the catalytic Proton donor.

This sequence belongs to the OMP decarboxylase family. Type 1 subfamily. As to quaternary structure, homodimer.

The enzyme catalyses orotidine 5'-phosphate + H(+) = UMP + CO2. Its pathway is pyrimidine metabolism; UMP biosynthesis via de novo pathway; UMP from orotate: step 2/2. Its function is as follows. Catalyzes the decarboxylation of orotidine 5'-monophosphate (OMP) to uridine 5'-monophosphate (UMP). The protein is Orotidine 5'-phosphate decarboxylase of Heliobacterium modesticaldum (strain ATCC 51547 / Ice1).